We begin with the raw amino-acid sequence, 284 residues long: MAKYEPVIPELEVNPEGEVSKIAEFLRGKFEEAGREIAVVGLSGGVDSSTTLGLAVEALGRENVVALILPERDTPEEDVEDAVEAAERFGVEYHVHDITEVLRAFGTGSYVPCHPFSRKSDANLKPRVRMCVLYYFANELDGLVLGTGNRTEWLTGYFTLHGDGACDVAPIRHLYKTQVYVIAEHLGVPERIVEEKEPSARLWPGQTDEGELGIDYPTLDALLYALVDEGLGPRKAVDWLGERGVEATEEDAEKVLDLVRSSSFKRRPAPGLDLPEPEDPAMSG.

Position 41 to 48 (Gly-41 to Ser-48) interacts with ATP. Residue Asp-47 participates in Mg(2+) binding. Deamido-NAD(+) is bound at residue Arg-127. Residue Thr-147 coordinates ATP. Residue Glu-152 coordinates Mg(2+). Deamido-NAD(+) is bound at residue Asp-167. Residues Lys-176 and Ser-199 each contribute to the ATP site. Residues Phe-264 to Gly-284 are disordered. The span at Pro-275 to Gly-284 shows a compositional bias: acidic residues.

Belongs to the NAD synthetase family. As to quaternary structure, homodimer.

The catalysed reaction is deamido-NAD(+) + NH4(+) + ATP = AMP + diphosphate + NAD(+) + H(+). It participates in cofactor biosynthesis; NAD(+) biosynthesis; NAD(+) from deamido-NAD(+) (ammonia route): step 1/1. Its function is as follows. Catalyzes the ATP-dependent amidation of deamido-NAD to form NAD. Uses ammonia as a nitrogen source. The chain is NH(3)-dependent NAD(+) synthetase from Methanopyrus kandleri (strain AV19 / DSM 6324 / JCM 9639 / NBRC 100938).